The sequence spans 732 residues: Acetophenone carboxylase gamma subunit (732 aa).

This sequence belongs to the HyuA family. In terms of assembly, acetophenone carboxylase consists of five subunits; a heterooctameric subcomplex of two alpha (Apc1), two beta (Apc2), two gamma (Apc3) and two delta (Apc4) subunits assembles with the epsilon (Apc5) subunit in an unknown stoichiometry. It depends on Mg(2+) as a cofactor. Requires Mn(2+) as cofactor.

The protein resides in the cytoplasm. It carries out the reaction acetophenone + hydrogencarbonate + 2 ATP + H2O = 3-oxo-3-phenylpropanoate + 2 ADP + 2 phosphate + 2 H(+). Inhibited by zinc ions, carbamoylphosphate and beta,gamma-imido-ATP. Catalyzes the carboxylation of acetophenone to form 3-oxo-3-phenylpropanoate (benzoylacetate) in the anaerobic catabolism of ethylbenzene. Also carboxylates propiophenone at the same rate and 4-acetyl-pyridine at lower rates. This Aromatoleum aromaticum (strain DSM 19018 / LMG 30748 / EbN1) (Azoarcus sp. (strain EbN1)) protein is Acetophenone carboxylase gamma subunit (apc3).